Reading from the N-terminus, the 102-residue chain is Fe-S protein maturation auxiliary factor YitW (102 aa).

The protein belongs to the MIP18 family.

Its function is as follows. Involved in the maturation of iron-sulfur (Fe-S) proteins. May function as a Fe-S cluster carrier. This chain is Fe-S protein maturation auxiliary factor YitW (yitW), found in Bacillus subtilis (strain 168).